A 165-amino-acid polypeptide reads, in one-letter code: Methyl-coenzyme M reductase II operon protein D (165 aa).

MCR is composed of three subunits: alpha, beta, and gamma. The function of protein D is not known.

This Methanothermus fervidus (strain ATCC 43054 / DSM 2088 / JCM 10308 / V24 S) protein is Methyl-coenzyme M reductase II operon protein D (mrtD).